The following is a 1098-amino-acid chain: Protein translocase subunit SecA (1098 aa).

Residues Gln176, 194 to 198 (GEGKT), and Asp696 each bind ATP. A disordered region spans residues 1024 to 1098 (EPEQVREAAP…KYKNCHGQNA (75 aa)). 2 stretches are compositionally biased toward basic and acidic residues: residues 1041 to 1051 (QYREEKQDLSD) and 1058 to 1077 (AEHD…KTVG). 4 residues coordinate Zn(2+): Cys1082, Cys1084, Cys1093, and His1094.

The protein belongs to the SecA family. As to quaternary structure, monomer and homodimer. Part of the essential Sec protein translocation apparatus which comprises SecA, SecYEG and auxiliary proteins SecDF. Other proteins may also be involved. The cofactor is Zn(2+).

It localises to the cell inner membrane. The protein localises to the cytoplasm. The enzyme catalyses ATP + H2O + cellular proteinSide 1 = ADP + phosphate + cellular proteinSide 2.. Its function is as follows. Part of the Sec protein translocase complex. Interacts with the SecYEG preprotein conducting channel. Has a central role in coupling the hydrolysis of ATP to the transfer of proteins into and across the cell membrane, serving as an ATP-driven molecular motor driving the stepwise translocation of polypeptide chains across the membrane. This is Protein translocase subunit SecA from Phocaeicola vulgatus (strain ATCC 8482 / DSM 1447 / JCM 5826 / CCUG 4940 / NBRC 14291 / NCTC 11154) (Bacteroides vulgatus).